The following is a 523-amino-acid chain: Melanoma-associated antigen E2 (523 aa).

2 MAGE domains span residues 88–288 and 311–502; these read LEDR…YNKA and MNDK…YREA.

The sequence is that of Melanoma-associated antigen E2 (MAGEE2) from Homo sapiens (Human).